The primary structure comprises 483 residues: Serralysin (483 aa).

Histidine 184 lines the Zn(2+) pocket. Glutamate 185 is a catalytic residue. Zn(2+)-binding residues include histidine 188 and histidine 194. Positions 263, 266, 295, 297, 298, 300, 337, and 339 each coordinate Ca(2+). 2 Hemolysin-type calcium-binding repeats span residues 342–359 and 360–377; these read IGGS…ENIL and KGGA…ADQL.

This sequence belongs to the peptidase M10B family. Zn(2+) serves as cofactor. Requires Ca(2+) as cofactor.

It localises to the secreted. It carries out the reaction Preferential cleavage of bonds with hydrophobic residues in P1'.. Inhibited by 8 mM 1,10-phenanthroline and 10 mM EDTA, but not by PMSF. Its function is as follows. Involved in the inhibition of insect antibacterial peptides. Reduces the antibacterial activity of G.mellonella hemolymph by 50%. Reduces the antibacterial activity of cecropin A by 80% and cecropin B by 75%. The protein is Serralysin of Photorhabdus sp. (strain Az29).